A 456-amino-acid chain; its full sequence is Phosphomethylpyrimidine synthase (456 aa).

Residues Asn-80, Met-109, Tyr-139, His-175, 195-197 (SRG), 236-239 (DSLR), and Glu-275 each bind substrate. His-279 provides a ligand contact to Zn(2+). A substrate-binding site is contributed by Tyr-302. A Zn(2+)-binding site is contributed by His-343. [4Fe-4S] cluster-binding residues include Cys-423, Cys-426, and Cys-431.

It belongs to the ThiC family. The cofactor is [4Fe-4S] cluster.

The enzyme catalyses 5-amino-1-(5-phospho-beta-D-ribosyl)imidazole + S-adenosyl-L-methionine = 4-amino-2-methyl-5-(phosphooxymethyl)pyrimidine + CO + 5'-deoxyadenosine + formate + L-methionine + 3 H(+). It participates in cofactor biosynthesis; thiamine diphosphate biosynthesis. Functionally, catalyzes the synthesis of the hydroxymethylpyrimidine phosphate (HMP-P) moiety of thiamine from aminoimidazole ribotide (AIR) in a radical S-adenosyl-L-methionine (SAM)-dependent reaction. The polypeptide is Phosphomethylpyrimidine synthase (Prochlorococcus marinus (strain MIT 9515)).